A 355-amino-acid polypeptide reads, in one-letter code: Heat-inducible transcription repressor HrcA (355 aa).

It belongs to the HrcA family.

Its function is as follows. Negative regulator of class I heat shock genes (grpE-dnaK-dnaJ and groELS operons). Prevents heat-shock induction of these operons. The sequence is that of Heat-inducible transcription repressor HrcA from Nitratidesulfovibrio vulgaris (strain ATCC 29579 / DSM 644 / CCUG 34227 / NCIMB 8303 / VKM B-1760 / Hildenborough) (Desulfovibrio vulgaris).